Here is a 329-residue protein sequence, read N- to C-terminus: GTPase Obg (329 aa).

The Obg domain occupies 1 to 159 (MQFIDQARIT…WLLHLELKLL (159 aa)). The region spanning 160–328 (AEVGIIGLPN…LLNKIWSKLE (169 aa)) is the OBG-type G domain. Residues 166-173 (GLPNAGKS), 191-195 (FTTLI), 213-216 (DIPG), 280-283 (NKKE), and 309-311 (SAI) each bind ATP. S173 and T193 together coordinate Mg(2+).

Belongs to the TRAFAC class OBG-HflX-like GTPase superfamily. OBG GTPase family. As to quaternary structure, monomer. Mg(2+) is required as a cofactor.

The protein resides in the cytoplasm. Its function is as follows. An essential GTPase which binds GTP, GDP and possibly (p)ppGpp with moderate affinity, with high nucleotide exchange rates and a fairly low GTP hydrolysis rate. Plays a role in control of the cell cycle, stress response, ribosome biogenesis and in those bacteria that undergo differentiation, in morphogenesis control. The polypeptide is GTPase Obg (Prochlorococcus marinus (strain SARG / CCMP1375 / SS120)).